The sequence spans 895 residues: Clathrin interactor EPSIN 2 (895 aa).

Residues 18-150 (KKVLKVPGVE…NDKERIAEVR (133 aa)) enclose the ENTH domain. Basic and acidic residues-rich tracts occupy residues 150–161 (RQKAAANRDKYR), 177–236 (DKYD…RSRS), and 245–257 (RSSE…DGHS). A disordered region spans residues 150-396 (RQKAAANRDK…PTVTSMSAPT (247 aa)). Phosphoserine occurs at positions 270 and 282. Positions 329–348 (AAPEAASPPTGTNTANTTAT) are enriched in low complexity. Composition is skewed to polar residues over residues 349–358 (FVNESPSQKV) and 387–396 (PTVTSMSAPT). A Clathrin binding motif is present at residues 409–413 (LADVF). Disordered regions lie at residues 436 to 533 (AGPA…PQEQ) and 758 to 784 (KQTN…GRSG). A compositionally biased stretch (low complexity) spans 440–454 (PSFSTSQPSTQSFDD). Residues 454–456 (DPF) carry the ALPHA-ADR binding motif. Composition is skewed to polar residues over residues 464–479 (FTST…NFGA), 515–533 (PASQ…PQEQ), and 759–769 (QTNTPATSTIN).

This sequence belongs to the epsin family. In terms of assembly, interacts with clathrin, VTI12, DELTA-ADR and ALPHA-ADR.

It is found in the golgi apparatus. Its subcellular location is the cytoplasmic vesicle. It localises to the clathrin-coated vesicle. Functionally, may have a role in transport via clathrin-coated vesicles from the trans-Golgi network to endosomes. Stimulates clathrin assembly. Binds to membranes enriched in phosphatidylinositol 3-phosphate (PtdIns(3)P). Plays an important role in protein trafficking. This chain is Clathrin interactor EPSIN 2 (EPSIN2), found in Arabidopsis thaliana (Mouse-ear cress).